The primary structure comprises 105 residues: MSSNQNIKIRLKSFDHRLIDLSTREIVDTAKRTGAQIRGPIPLPIRKEKFTVLTSPHVNKDARDQYELRTHKRLVVIVHPTEKTVDALMKLDLAAGVDVQISLDD.

This sequence belongs to the universal ribosomal protein uS10 family. As to quaternary structure, part of the 30S ribosomal subunit.

Its function is as follows. Involved in the binding of tRNA to the ribosomes. The protein is Small ribosomal subunit protein uS10 of Legionella pneumophila (strain Paris).